The chain runs to 852 residues: Disease resistance RPP13-like protein 4 (852 aa).

The stretch at 17–68 (LEEKGRTVSDYRKQLEDLQSELKYMQSFLKDAERQKRTNETLRTLVADLREL) forms a coiled coil. ADP-binding positions include Arg149, Val161, 189 to 196 (GMGGLGKT), Arg297, and Lys363. An NB-ARC domain is found at 164 to 410 (EGDKRKIKEW…MSSLQLSYDE (247 aa)). LRR repeat units follow at residues 558 to 581 (CKYL…ILDE), 585 to 609 (LQHL…MEDL), 633 to 657 (FKKL…IGSL), 683 to 706 (LTNL…ELDS), 763 to 786 (LPML…FWGN), and 798 to 824 (LSSL…VTAN).

This sequence belongs to the disease resistance NB-LRR family. RPP13 subfamily. Interacts with ZED1/ZRK5. Component of a stable high-order oligomeric complex made of RKS1 and RPP13L4/ZAR1 which recruits ZED1-related kinases (e.g. uridylylated PBL2 and acetylated ZED1/ZRK5) in the presence of ATP and pathogenic bacteria type III secreted effector (T3SE) proteins (e.g. Pseudomonas syringae HopZ1a and HopF2a and Xanthomonas campestris pv. campestris (Xcc) XopAC/AvrAC) to form a wheel-like pentameric resistosome; this complex triggers immunity toward pathogenic bacteria (e.g. X.campestris and P.syringae), especially in vascular tissues. Interacts with RKS1, ZED1/ZRK5, ZRK3, ZRK6 and ZRK15.

The protein resides in the cell membrane. The protein localises to the nucleus. With respect to regulation, exhibits autoinhibition activity. In terms of biological role, CC-NB-LRR receptor-like protein required for recognition of pathogenic bacteria type III effectors (T3E) such as Pseudomonas syringae HopZ1a and HopF2a and Xanthomonas campestris pv. campestris (Xcc) XopAC/AvrAC; this recognition requires ZED1-related kinases (e.g. PBL2, ZRK3 and ZED1/ZRK5). Confers allele-specific recognition and virulence attenuation of HopZ1a. Immunity mediated by RPP13L4/ZAR1 is independent of several genes required by other resistance protein signaling pathways such as NDR1 and RAR1. Together with ZED1/ZRK5, involved in the regulation of the ambient temperature-sensitive intersection of growth and immune response in the absence of pathogens. This is Disease resistance RPP13-like protein 4 (RPP13L4) from Arabidopsis thaliana (Mouse-ear cress).